Reading from the N-terminus, the 468-residue chain is Interleukin-6 receptor subunit alpha (468 aa).

Residues 1-19 (MLAVGCALLAALLAAPGAA) form the signal peptide. At 20 to 365 (LAPRRCPAQE…VQDSSSVPLP (346 aa)) the chain is on the extracellular side. Disulfide bonds link Cys25/Cys193, Cys47/Cys96, Cys121/Cys132, and Cys165/Cys176. The Ig-like C2-type domain maps to 26-112 (PAQEVARGVL…AGTVHLLVDV (87 aa)). Residues Asn55 and Asn93 are each glycosylated (N-linked (GlcNAc...) asparagine). 2 consecutive Fibronectin type-III domains span residues 113 to 217 (PPEE…LQPD) and 218 to 316 (PPAN…TPWT). 2 N-linked (GlcNAc...) asparagine glycosylation sites follow: Asn221 and Asn245. Residues 303–307 (WSEWS) carry the WSXWS motif motif. A disordered region spans residues 303 to 328 (WSEWSPEAMGTPWTESRSPPAENEVS). An N-linked (GlcNAc...) asparagine glycan is attached at Asn350. The O-linked (GlcNAc) threonine glycan is linked to Thr352. A helical membrane pass occupies residues 366-386 (TFLVAGGSLAFGTLLCIAIVL). Over 387 to 468 (RFKKTWKLRA…ISNTDYFFPR (82 aa)) the chain is Cytoplasmic. The span at 421–433 (TPVLVPLISPPVS) shows a compositional bias: pro residues. The tract at residues 421–468 (TPVLVPLISPPVSPSSLGSDNTSSHNRPDARDPRSPYDISNTDYFFPR) is disordered. Residues 446-455 (NRPDARDPRS) are compositionally biased toward basic and acidic residues. The span at 458–468 (DISNTDYFFPR) shows a compositional bias: polar residues.

This sequence belongs to the type I cytokine receptor family. Type 3 subfamily. In terms of assembly, component of a hexamer of two molecules each of IL6, IL6R and IL6ST; first binds to IL6 to associate with the signaling subunit IL6ST. Interacts (via N-terminal ectodomain) with SORL1; this interaction may affect IL6-binding to IL6R, hence decrease IL6 'classic-signaling'. As to quaternary structure, also interacts with SORL1; this interaction leads to soluble IL6R internalization. May form a trimeric complex with the soluble SORL1 ectodomain and circulating IL6 receptor; this interaction might stabilize circulating IL6, hence promote IL6 'trans-signaling,. In terms of processing, a short soluble form is released from the membrane by proteolysis. The sIL6R is formed mostly by limited proteolysis of membrane-bound receptors, a process referred to as ectodomain shedding, but is also directly secreted from the cells after alternative mRNA splicing. mIL6R is cleaved by the proteases ADAM10 and ADAM17. Glycosylated. Glycosylation is dispensable for transport, signaling, and cell-surface turnover. Glycosylation at Asn-55 is a protease-regulatory exosite. Glycosylation is required for ADAM17-mediated proteolysis. In terms of tissue distribution, expressed in peripheral blood mononuclear cells and weakly found in urine and serum. 1%-20% of the total sIL6R in plasma is generated by alternative splicing.

Its subcellular location is the cell membrane. The protein resides in the secreted. Its activity is regulated as follows. Classic and trans-signaling are both inhibited by tocilizumab, a humanized monoclonal antibody that blocks interleukin IL6R signaling. Its function is as follows. Part of the receptor for interleukin 6. Binds to IL6 with low affinity, but does not transduce a signal. Signal activation necessitate an association with IL6ST. Activation leads to the regulation of the immune response, acute-phase reactions and hematopoiesis. The interaction with membrane-bound IL6R and IL6ST stimulates 'classic signaling', the restricted expression of the IL6R limits classic IL6 signaling to only a few tissues such as the liver and some cells of the immune system. Whereas the binding of IL6 and soluble IL6R to IL6ST stimulates 'trans-signaling'. Alternatively, 'cluster signaling' occurs when membrane-bound IL6:IL6R complexes on transmitter cells activate IL6ST receptors on neighboring receiver cells. Signaling via the membrane-bound IL6R is mostly regenerative and anti-inflammatory. Drives naive CD4(+) T cells to the Th17 lineage, through 'cluster signaling' by dendritic cells. Functionally, soluble form of IL6 receptor (sIL6R) that acts as an agonist of IL6 activity. The IL6:sIL6R complex (hyper-IL6) binds to IL6ST/gp130 on cell surfaces and induces signaling also on cells that do not express membrane-bound IL6R in a process called IL6 'trans-signaling'. sIL6R is causative for the pro-inflammatory properties of IL6 and an important player in the development of chronic inflammatory diseases. In complex with IL6, is required for induction of VEGF production. Plays a protective role during liver injury, being required for maintenance of tissue regeneration. 'Trans-signaling' in central nervous system regulates energy and glucose homeostasis. The protein is Interleukin-6 receptor subunit alpha of Homo sapiens (Human).